We begin with the raw amino-acid sequence, 342 residues long: Protein rough sheath 2 homolog (342 aa).

HTH myb-type domains follow at residues 1–58 and 59–113; these read MQPP…KNYL and RPGI…EKQQ. 2 consecutive DNA-binding regions (H-T-H motif) follow at residues 32–58 and 86–109; these read WSLV…KNYL and WKKI…EVFK. A coiled-coil region spans residues 253–304; the sequence is RRREATEEFEAKMRALREEQAAAVERVEAEYREKMAGLRRDAEAKEQKMAEQ.

The protein localises to the nucleus. Its function is as follows. Transcription factor required for normal cell differentiation. May interact with other proteins to repress the knox homeobox genes. This is Protein rough sheath 2 homolog (RS2) from Oryza sativa subsp. japonica (Rice).